We begin with the raw amino-acid sequence, 502 residues long: uncharacterized protein (502 aa).

2 helical membrane passes run 10-30 (NLTLNLTIIFLIFCNISIXIF) and 473-493 (FSLIIVNLIILPTIILIFGLV).

The protein localises to the cell membrane. This is an uncharacterized protein from Borreliella burgdorferi (strain ATCC 35210 / DSM 4680 / CIP 102532 / B31) (Borrelia burgdorferi).